The following is a 232-amino-acid chain: Ribose-5-phosphate isomerase A (232 aa).

Residues 28-31 (TGST), 83-86 (DGAD), and 96-99 (KGGG) contribute to the substrate site. The active-site Proton acceptor is Glu105. Residue Lys123 coordinates substrate.

Belongs to the ribose 5-phosphate isomerase family. Homodimer.

The catalysed reaction is aldehydo-D-ribose 5-phosphate = D-ribulose 5-phosphate. It participates in carbohydrate degradation; pentose phosphate pathway; D-ribose 5-phosphate from D-ribulose 5-phosphate (non-oxidative stage): step 1/1. In terms of biological role, catalyzes the reversible conversion of ribose-5-phosphate to ribulose 5-phosphate. The sequence is that of Ribose-5-phosphate isomerase A from Rhodopseudomonas palustris (strain BisB18).